Here is a 321-residue protein sequence, read N- to C-terminus: Cytochrome c biogenesis protein CcsA (321 aa).

The next 8 helical transmembrane spans lie at 17-37, 44-64, 71-91, 98-118, 143-163, 225-245, 258-275, and 286-306; these read IVSIVITIHLITLLVDEIVGL, GMISTFLCITGLLVTRWIYSG, LYESLIFLSWSFSIIHMIPYF, LSLVTAPSAIFTQGFATSGLL, MVLSYGALLCGSLLSVALLVI, VISLGFIFLTIGILSGAVWAN, ETWAFITWTIFAIYLHTR, and AIVASIGFIIIWICYFGVNLL.

The protein belongs to the CcmF/CycK/Ccl1/NrfE/CcsA family. In terms of assembly, may interact with Ccs1.

It is found in the plastid. Its subcellular location is the chloroplast thylakoid membrane. In terms of biological role, required during biogenesis of c-type cytochromes (cytochrome c6 and cytochrome f) at the step of heme attachment. In Buxus microphylla (Littleleaf boxwood), this protein is Cytochrome c biogenesis protein CcsA.